The following is a 145-amino-acid chain: Thioredoxin C-3 (145 aa).

C25, C28, and H29 together coordinate heme. Residues 29 to 140 (HQALLPLEPI…LQQWLDQQLQ (112 aa)) form the Thioredoxin domain. A disulfide bridge connects residues C65 and C68.

The protein belongs to the thioredoxin family.

In terms of biological role, participates in various redox reactions through the reversible oxidation of its active center dithiol to a disulfide and catalyzes dithiol-disulfide exchange reactions. In Corynebacterium nephridii, this protein is Thioredoxin C-3.